A 551-amino-acid polypeptide reads, in one-letter code: Hydroxymethylpyrimidine/phosphomethylpyrimidine kinase THI20 (551 aa).

Glutamine 64 lines the 4-amino-5-hydroxymethyl-2-methylpyrimidine pocket. The Nucleophile role is filled by cysteine 468. Residue glutamate 540 is the Proton donor of the active site.

The protein in the N-terminal section; belongs to the ThiD family. In the C-terminal section; belongs to the thiaminase-2 family.

It carries out the reaction 4-amino-5-hydroxymethyl-2-methylpyrimidine + ATP = 4-amino-2-methyl-5-(phosphooxymethyl)pyrimidine + ADP + H(+). It catalyses the reaction 4-amino-2-methyl-5-(phosphooxymethyl)pyrimidine + ATP = 4-amino-2-methyl-5-(diphosphooxymethyl)pyrimidine + ADP. The enzyme catalyses thiamine + H2O = 5-(2-hydroxyethyl)-4-methylthiazole + 4-amino-5-hydroxymethyl-2-methylpyrimidine + H(+). It participates in cofactor biosynthesis; thiamine diphosphate biosynthesis; 4-amino-2-methyl-5-diphosphomethylpyrimidine from 5-amino-1-(5-phospho-D-ribosyl)imidazole: step 2/3. Its pathway is cofactor biosynthesis; thiamine diphosphate biosynthesis; 4-amino-2-methyl-5-diphosphomethylpyrimidine from 5-amino-1-(5-phospho-D-ribosyl)imidazole: step 3/3. Functionally, trifunctional protein with both thiamine biosynthetic and degradative activity. Within the thiamine biosynthesis pathway, catalyzes the phosphorylation of hydroxymethylpyrimidine (HMP) to hydroxymethylpyrimidine phosphate (HMP-P), as well as of HMP-P to HMP-PP. Also has thiaminase II activity and degrades thiamine using water as the nucleophile, resulting only in the formation of HMP (4-amino-2-methyl-5-hydroxymethylpyrimidine) and Thz (4-methyl-5-thiazole ethanol). This chain is Hydroxymethylpyrimidine/phosphomethylpyrimidine kinase THI20, found in Saccharomyces cerevisiae (strain ATCC 204508 / S288c) (Baker's yeast).